A 391-amino-acid polypeptide reads, in one-letter code: MERAIRNFLSQESAGGILLMVSVVLAMILANSPLSGMYHGFLETEMQVRVGNLDIDKTLIHWINDGLMAIFFMLIGLEVKRELLEGALSSRAQASLPTFAAIGGMVFPAAVYLIFNYSDPITQVGWAIPAATDIAFALGIMALLGSRVPVALKVFLLALAIIDDLGVVVIIALFYSTDLSTISLIIAAAAILGLIGLNRKGVTSLAPYGVVGLILWIAVLKSGVHATLAGVIIAFCIPLRAKDGSSPSESLEHSLHPWSTFIILPIFAFANAGVDLSGMSLSSLLSPVPLGIALGLLVGKPLGIMLFSYIAVKLKLAVLPEGMGWRHITPVAVMCGIGFTMSMFISSLAFVGEGQMYGDYARLGILLGSIASATIGYFWLSKVLPEKGAKA.

Transmembrane regions (helical) follow at residues 14-34, 59-79, 95-115, 124-144, 154-174, 177-197, 213-233, 261-281, 292-312, 331-351, and 363-383; these read AGGILLMVSVVLAMILANSPL, LIHWINDGLMAIFFMLIGLEV, SLPTFAAIGGMVFPAAVYLIF, VGWAIPAATDIAFALGIMALL, VFLLALAIIDDLGVVVIIALF, TDLSTISLIIAAAAILGLIGL, LILWIAVLKSGVHATLAGVII, FIILPIFAFANAGVDLSGMSL, IALGLLVGKPLGIMLFSYIAV, VAVMCGIGFTMSMFISSLAFV, and LGILLGSIASATIGYFWLSKV.

This sequence belongs to the NhaA Na(+)/H(+) (TC 2.A.33) antiporter family.

It localises to the cell inner membrane. It catalyses the reaction Na(+)(in) + 2 H(+)(out) = Na(+)(out) + 2 H(+)(in). Na(+)/H(+) antiporter that extrudes sodium in exchange for external protons. The chain is Na(+)/H(+) antiporter NhaA from Shewanella pealeana (strain ATCC 700345 / ANG-SQ1).